The following is a 208-amino-acid chain: Apoptosis inhibitor 193R (208 aa).

A disordered region spans residues 1–25 (MDTCGIYNSDNEEFSQENDGENDGG). A compositionally biased stretch (acidic residues) spans 10-23 (DNEEFSQENDGEND). The stretch at 37–108 (YDERLNSFQN…QDLKINCLFV (72 aa)) is one BIR repeat. Zn(2+) is bound by residues Cys74, Cys77, His94, and Cys105. 3 repeat units span residues 134 to 139 (NQDLDH), 140 to 145 (NQDLDH), and 146 to 151 (NQDLDQ). The 3 X 6 AA tandem repeats stretch occupies residues 134-151 (NQDLDHNQDLDHNQDLDQ). The RING-type zinc finger occupies 163-197 (CKICFTNKITKVLIPCGHSSCYECVFKLQTCPICK).

The protein belongs to the IIV-6 193R family.

Its function is as follows. Plays a role early in infection by preventing host cell apoptosis. The protein is Apoptosis inhibitor 193R of Invertebrate iridescent virus 6 (IIV-6).